The following is a 691-amino-acid chain: MSDYLVIVESPAKAKTIERYLGKKYKVKASMGHVRDLPKSQMGVDIEQNFEPKYITIRGKGPVLKELKTAAKKAKKVYLAADPDREGEAIAWHLAHSLDLDLNSDCRVVFNEITKDAIKESFKHPRMINMDLVDAQQARRILDRLVGYKISPILWKKVKKGLSAGRVQSVALRLIIDREKEINDFKPEEYWTIDGTFLKGQETFEASFFGKNGKKLPLNSEADVKEILSQLKGNQYTVEKVTKKERKRNPALPFTTSTLQQEAARKLNFRAKKTMMIAQQLYEGIDLGREGTVGLITYMRTDSTRISNTAVDEAAAFIDQTYGKEFLGGKRKPAKKNENAQDAHEAIRPTSVLRKPSELKAVLGRDQMRLYKLIWERFVASQMAPAVLDTMSVDLTNNGLTFRANGSKVKFSGFMKVYVEGKDDQMEEKDRMLPDLQEGDTVLSKDIEPEQHFTQPPPRYTEARLVKTLEERGIGRPSTYAPTLDTIQRRGYVALDNKRFVPTELGQIVLDLIMEFFPEIINVEFTAKMERDLDHVEEGNTEWVKIIDNFYTDFEKRVKKAESEMKEVEIEPEYAGEDCELCSSPMVYKMGRYGKFLACSNFPDCRNTKPIVKQIGVKCPSCGEGNIVERKSKKKRVFYGCDRYPDCEFVSWDKPIERKCPKCGKMLVEKKLKKGIQVQCVECDYKEEPQK.

In terms of domain architecture, Toprim spans 3 to 114; it reads DYLVIVESPA…DCRVVFNEIT (112 aa). Mg(2+) is bound by residues E9 and D82. A Topo IA-type catalytic domain is found at 129-558; that stretch reads NMDLVDAQQA…NFYTDFEKRV (430 aa). The interaction with DNA stretch occupies residues 163–168; sequence SAGRVQ. The active-site O-(5'-phospho-DNA)-tyrosine intermediate is the Y298. 3 C4-type zinc fingers span residues 579-605, 619-647, and 660-683; these read CELC…FPDC, CPSC…YPDC, and CPKC…CVEC.

It belongs to the type IA topoisomerase family. In terms of assembly, monomer. Interacts with the RNA polymerase core. Mg(2+) is required as a cofactor.

It carries out the reaction ATP-independent breakage of single-stranded DNA, followed by passage and rejoining.. Its function is as follows. Releases the supercoiling and torsional tension of DNA, which is introduced during the DNA replication and transcription, by transiently cleaving and rejoining one strand of the DNA duplex. Introduces a single-strand break via transesterification at a target site in duplex DNA. The scissile phosphodiester is attacked by the catalytic tyrosine of the enzyme, resulting in the formation of a DNA-(5'-phosphotyrosyl)-enzyme intermediate and the expulsion of a 3'-OH DNA strand. The free DNA strand then undergoes passage around the unbroken strand, thus removing DNA supercoils. Finally, in the religation step, the DNA 3'-OH attacks the covalent intermediate to expel the active-site tyrosine and restore the DNA phosphodiester backbone. The polypeptide is DNA topoisomerase 1 (Bacillus subtilis (strain 168)).